The chain runs to 196 residues: Putative NADH dehydrogenase/NAD(P)H nitroreductase Pnuc_0932 (196 aa).

This sequence belongs to the nitroreductase family. HadB/RutE subfamily. It depends on FMN as a cofactor.

This is Putative NADH dehydrogenase/NAD(P)H nitroreductase Pnuc_0932 from Polynucleobacter asymbioticus (strain DSM 18221 / CIP 109841 / QLW-P1DMWA-1) (Polynucleobacter necessarius subsp. asymbioticus).